The following is a 449-amino-acid chain: Xylose isomerase (449 aa).

Residues H101 and D104 contribute to the active site. Mg(2+) contacts are provided by E232, E268, H271, D296, D307, D309, and D340.

It belongs to the xylose isomerase family. As to quaternary structure, homotetramer. Mg(2+) is required as a cofactor.

It localises to the cytoplasm. The catalysed reaction is alpha-D-xylose = alpha-D-xylulofuranose. The chain is Xylose isomerase from Bifidobacterium longum (strain DJO10A).